The sequence spans 403 residues: Argininosuccinate synthase (403 aa).

ATP is bound by residues 10-18 and A37; that span reads AYSGGLDTS. Y89 is an L-citrulline binding site. G119 contacts ATP. The L-aspartate site is built by T121, N125, and D126. N125 contacts L-citrulline. R129, S178, S187, E263, and Y275 together coordinate L-citrulline.

Belongs to the argininosuccinate synthase family. Type 1 subfamily. Homotetramer.

It localises to the cytoplasm. The enzyme catalyses L-citrulline + L-aspartate + ATP = 2-(N(omega)-L-arginino)succinate + AMP + diphosphate + H(+). It functions in the pathway amino-acid biosynthesis; L-arginine biosynthesis; L-arginine from L-ornithine and carbamoyl phosphate: step 2/3. The protein is Argininosuccinate synthase of Idiomarina loihiensis (strain ATCC BAA-735 / DSM 15497 / L2-TR).